A 524-amino-acid chain; its full sequence is Cytochrome P450 4F12 (524 aa).

2 helical membrane passes run 19-39 (WLLL…AWTY) and 87-107 (GFTV…PDTI). A heme-binding site is contributed by cysteine 468.

It belongs to the cytochrome P450 family. It depends on heme as a cofactor. Expressed in small intestine, liver, colon and heart.

The protein resides in the endoplasmic reticulum membrane. The protein localises to the microsome membrane. The enzyme catalyses an organic molecule + reduced [NADPH--hemoprotein reductase] + O2 = an alcohol + oxidized [NADPH--hemoprotein reductase] + H2O + H(+). It carries out the reaction (5Z,8Z,11Z,14Z)-eicosatetraenoate + reduced [NADPH--hemoprotein reductase] + O2 = 18-hydroxy-(5Z,8Z,11Z,14Z)-eicosatetraenoate + oxidized [NADPH--hemoprotein reductase] + H2O + H(+). It catalyses the reaction (7Z,10Z,13Z,16Z,19Z)-docosapentaenoate + reduced [NADPH--hemoprotein reductase] + O2 = 10,11-epoxy-(7Z,13Z,16Z,19Z)-docosatetraenoate + oxidized [NADPH--hemoprotein reductase] + H2O + H(+). The catalysed reaction is (7Z,10Z,13Z,16Z,19Z)-docosapentaenoate + reduced [NADPH--hemoprotein reductase] + O2 = 13,14-epoxy-(7Z,10Z,16Z,19Z)-docosatetraenoate + oxidized [NADPH--hemoprotein reductase] + H2O + H(+). The enzyme catalyses (7Z,10Z,13Z,16Z,19Z)-docosapentaenoate + reduced [NADPH--hemoprotein reductase] + O2 = 16,17-epoxy-(7Z,10Z,13Z,19Z)-docosatetraenoate + oxidized [NADPH--hemoprotein reductase] + H2O + H(+). It carries out the reaction (7Z,10Z,13Z,16Z,19Z)-docosapentaenoate + reduced [NADPH--hemoprotein reductase] + O2 = 19,20-epoxy-(7Z,10Z,13Z,16Z)-docosatetraenoate + oxidized [NADPH--hemoprotein reductase] + H2O + H(+). It catalyses the reaction (4Z,7Z,10Z,13Z,16Z,19Z)-docosahexaenoate + reduced [NADPH--hemoprotein reductase] + O2 = 10,11-epoxy-(4Z,7Z,13Z,16Z,19Z)-docosapentaenoate + oxidized [NADPH--hemoprotein reductase] + H2O + H(+). The catalysed reaction is (4Z,7Z,10Z,13Z,16Z,19Z)-docosahexaenoate + reduced [NADPH--hemoprotein reductase] + O2 = 13,14-epoxy-(4Z,7Z,10Z,16Z,19Z)-docosapentaenoate + oxidized [NADPH--hemoprotein reductase] + H2O + H(+). The enzyme catalyses (4Z,7Z,10Z,13Z,16Z,19Z)-docosahexaenoate + reduced [NADPH--hemoprotein reductase] + O2 = 16,17-epoxy-(4Z,7Z,10Z,13Z,19Z)-docosapentaenoate + oxidized [NADPH--hemoprotein reductase] + H2O + H(+). It carries out the reaction (4Z,7Z,10Z,13Z,16Z,19Z)-docosahexaenoate + reduced [NADPH--hemoprotein reductase] + O2 = 19,20-epoxy-(4Z,7Z,10Z,13Z,16Z)-docosapentaenoate + oxidized [NADPH--hemoprotein reductase] + H2O + H(+). It participates in lipid metabolism; arachidonate metabolism. Its function is as follows. A cytochrome P450 monooxygenase involved in the metabolism of endogenous polyunsaturated fatty acids (PUFAs). Mechanistically, uses molecular oxygen inserting one oxygen atom into a substrate, and reducing the second into a water molecule, with two electrons provided by NADPH via cytochrome P450 reductase (CPR; NADPH-ferrihemoprotein reductase). Catalyzes the hydroxylation of carbon hydrogen bonds, with preference for omega-2 position. Metabolizes (5Z,8Z,11Z,14Z)-eicosatetraenoic acid (arachidonate) toward 18-hydroxy arachidonate. Catalyzes the epoxidation of double bonds of PUFAs such as docosapentaenoic and docosahexaenoic acids. Has low omega-hydroxylase activity toward leukotriene B4 and arachidonate. Involved in the metabolism of xenobiotics. Catalyzes the hydroxylation of the antihistamine drug ebastine. The sequence is that of Cytochrome P450 4F12 from Homo sapiens (Human).